The following is a 542-amino-acid chain: MDLEAVCKRSALHAKPQGLILQYGTAGFRTNAQHLDHIMFRMGLLAVLRSKQTRSTIGVMVTASHNPEEDNGVKLVDPLGEMLAPSWEEHATCLASAEEQDVRQVLAAIVEKEAVDLTQTAFVVIARDTRPSSEKLSQSVIDGVTVLGGQFHDYGLLTTPQLHYMVYCRNSGGRYGQATVEGYCQKLSKAFVDLTNQVSCSGDVKRSVKVDCANGIGALKLREMEHYFSRGLSVLLFNDGTQGRLNHLCGADFVKSQQKPPQGIEMKSGERCCSFDGDADRIVYYYCDADGHFHLIDGDKIATLISSFLKELLLEIGESVNLGVVQTAYANGSSTRYLEEVMKVPVYCTKTGVKHLHHKAQEFDIGVYFEANGHGTALFSEAVEVKIKRLAQELDDGKGKAARTLASIIDLFNQAAGDAISDMLVIEAILALKGLTVQQWDAIYVDLPNRQLKVKVADRRVISTTDAERQAVTPPGLQEAINDLVKKYTLARAFVRPSGTEDIVRVYAEANSQESADRLAYEVSLLVFQLAGGIGERPQPTF.

Met-1 bears the N-acetylmethionine mark. Thr-62 carries the phosphothreonine modification. The Phosphoserine intermediate role is filled by Ser-64. The Mg(2+) site is built by Ser-64, Asp-276, Asp-278, and Asp-280. A Phosphoserine modification is found at Ser-64. Residues Glu-370 to Asn-372, Arg-496 to Thr-500, and Arg-505 each bind substrate.

The protein belongs to the phosphohexose mutase family. Requires Mg(2+) as cofactor.

It catalyses the reaction N-acetyl-alpha-D-glucosamine 1-phosphate = N-acetyl-D-glucosamine 6-phosphate. The protein operates within nucleotide-sugar biosynthesis; UDP-N-acetyl-alpha-D-glucosamine biosynthesis; N-acetyl-alpha-D-glucosamine 1-phosphate from alpha-D-glucosamine 6-phosphate (route I): step 2/2. Catalyzes the conversion of GlcNAc-6-P into GlcNAc-1-P during the synthesis of uridine diphosphate/UDP-GlcNAc, a sugar nucleotide critical to multiple glycosylation pathways including protein N- and O-glycosylation. This chain is Phosphoacetylglucosamine mutase, found in Mus musculus (Mouse).